We begin with the raw amino-acid sequence, 275 residues long: Large ribosomal subunit protein uL2 (275 aa).

Positions 223–275 (VAMNPVDHPHGGGEGRTGEAREPVSPWGTPSKGFKTRRNKRTNNMIVQRRKRK) are disordered. Positions 229-244 (DHPHGGGEGRTGEARE) are enriched in basic and acidic residues.

It belongs to the universal ribosomal protein uL2 family. Part of the 50S ribosomal subunit. Forms a bridge to the 30S subunit in the 70S ribosome.

Functionally, one of the primary rRNA binding proteins. Required for association of the 30S and 50S subunits to form the 70S ribosome, for tRNA binding and peptide bond formation. It has been suggested to have peptidyltransferase activity; this is somewhat controversial. Makes several contacts with the 16S rRNA in the 70S ribosome. This is Large ribosomal subunit protein uL2 from Bordetella petrii (strain ATCC BAA-461 / DSM 12804 / CCUG 43448).